Here is a 707-residue protein sequence, read N- to C-terminus: MANSSSQHMVCGSVTFRDVAVDFSQEEWACLDATQKVLYRNIMLETYSNLVAVVGRCIPKPDLIVLLEPEKEPWMAVKKETGRPSQGLETGFEAENRSPKNHVYNKKLPKQTIQQLSKTSDVQGVSVSNGPGYSVIKEPQNYQEGDANRNITNKKEMSTYTSKTLAHNKEKPYKCKDCGKCFGCKSNLHQHESIHTGEKPYECKDCGKTFRLPQMLSRHQKSHSDERPFECNICGKSFHLPTLLQYHKNIHTGLKPFECEECGKSFKSFNRISTLFQHRTIHAGMKPYKCNVCGKAFNRRSNLLQHQKIHSEDRPFHCKVCGKAFTVLAQLTRHENIHTEDKSFECKQCGKIFSNGSYLLRHYDTHTNEKPFECNICGKAFRLHLYLSEHQKTHTDEKPFKCKLCESAFRRKYQLSEHQRIHTDGKPYQCKDCWEFFRRRSNFIEHQSIHTGKKPFECKDCGKVFRLNIHLIRHQRFHSDEKPFECKECGKAFHFSSQLNNHKTSHTGQTPFECKECGKSFKRVSSLVEHRIIHSGVKPYKCNACGRAFNRRSNLMQHEKIHSDERPFECKDCGKAFTVLAQLTRHQTIHNGKKSYECEQCGSAFRLPYQLTQHQRIHYDVKPFQCKECGRAFVRSTGLRIHERIHTGEKPFQCKECGEAFQYHYQFLGHFRIHTGKNPYECSECGKYFTYGRDLKVHQSIHNLEKP.

One can recognise a KRAB domain in the interval 14–86 (VTFRDVAVDF…VKKETGRPSQ (73 aa)). 19 consecutive C2H2-type zinc fingers follow at residues 173–195 (YKCKDCGKCFGCKSNLHQHESIH), 201–223 (YECKDCGKTFRLPQMLSRHQKSH), 229–251 (FECNICGKSFHLPTLLQYHKNIH), 257–282 (FECEECGKSFKSFNRISTLFQHRTIH), 288–310 (YKCNVCGKAFNRRSNLLQHQKIH), 316–338 (FHCKVCGKAFTVLAQLTRHENIH), 344–366 (FECKQCGKIFSNGSYLLRHYDTH), 372–394 (FECNICGKAFRLHLYLSEHQKTH), 400–422 (FKCKLCESAFRRKYQLSEHQRIH), 428–450 (YQCKDCWEFFRRRSNFIEHQSIH), 456–478 (FECKDCGKVFRLNIHLIRHQRFH), 484–506 (FECKECGKAFHFSSQLNNHKTSH), 512–534 (FECKECGKSFKRVSSLVEHRIIH), 540–562 (YKCNACGRAFNRRSNLMQHEKIH), 568–590 (FECKDCGKAFTVLAQLTRHQTIH), 596–618 (YECEQCGSAFRLPYQLTQHQRIH), 624–646 (FQCKECGRAFVRSTGLRIHERIH), 652–674 (FQCKECGEAFQYHYQFLGHFRIH), and 680–702 (YECSECGKYFTYGRDLKVHQSIH).

The protein belongs to the krueppel C2H2-type zinc-finger protein family. In terms of tissue distribution, expressed widely and evenly in most adult mouse tissues.

It is found in the nucleus. In terms of biological role, may have a role during differentiation processes. The sequence is that of Zinc finger protein 60 (Zfp60) from Mus musculus (Mouse).